The following is a 277-amino-acid chain: MEFIKITEQPSLYDDLDKKSVKEILEDINTEDHKVADAVQKAIPQIEKLVTLIIPRVKKGGRIFYMGAGTSGRLGVLDASEIPPTFGMPPTVVIGLIAGGDTALRNPVENAEDDMSRGWEELLQHHINSEDTVIGIAASGTTPYVIGAMRTAREHGILTGCITSNPNSPMATEADVPIEVIVGPEYVTGSSRMKSGTAQKMILNMISTTIMIELGRVQGNKMVNMQLSNQKLIDRGTRMIIEELHLDYEKAEALLLLHGSVKSAIEAYRRHNSTQQE.

Residues 53–216 enclose the SIS domain; the sequence is IIPRVKKGGR…STTIMIELGR (164 aa). The Proton donor role is filled by Glu-81. Glu-112 is an active-site residue.

Belongs to the GCKR-like family. MurNAc-6-P etherase subfamily. Homodimer.

It carries out the reaction N-acetyl-D-muramate 6-phosphate + H2O = N-acetyl-D-glucosamine 6-phosphate + (R)-lactate. Its pathway is amino-sugar metabolism; N-acetylmuramate degradation. Specifically catalyzes the cleavage of the D-lactyl ether substituent of MurNAc 6-phosphate, producing GlcNAc 6-phosphate and D-lactate. This Bacteroides thetaiotaomicron (strain ATCC 29148 / DSM 2079 / JCM 5827 / CCUG 10774 / NCTC 10582 / VPI-5482 / E50) protein is N-acetylmuramic acid 6-phosphate etherase.